The chain runs to 89 residues: Bombyxin A-2 (89 aa).

An N-terminal signal peptide occupies residues 1–19; that stretch reads MKILLAIALMLSTVMWVST. Gln20 is modified (pyrrolidone carboxylic acid). 3 cysteine pairs are disulfide-bonded: Cys29–Cys76, Cys41–Cys89, and Cys75–Cys80. The propeptide at 50–68 is c peptide like; the sequence is SDAQFASYGSAWLMPYSAG.

Belongs to the insulin family. Heterodimer of a B chain and an A chain linked by two disulfide bonds.

It is found in the secreted. Functionally, brain peptide responsible for activation of prothoracic glands to produce ecdysone in insects. In Bombyx mori (Silk moth), this protein is Bombyxin A-2 (BBXA2).